Reading from the N-terminus, the 154-residue chain is Transcriptional repressor NrdR (154 aa).

The tract at residues 1–22 (MECPNCHKNASRVIDSRPSDEN) is disordered. A zinc finger lies at 3–34 (CPNCHKNASRVIDSRPSDENRAIRRRRECENC). In terms of domain architecture, ATP-cone spans 49–139 (LLVIKNDGTR…IYRQFKDVSG (91 aa)).

This sequence belongs to the NrdR family. It depends on Zn(2+) as a cofactor.

Its function is as follows. Negatively regulates transcription of bacterial ribonucleotide reductase nrd genes and operons by binding to NrdR-boxes. The protein is Transcriptional repressor NrdR of Lactobacillus gasseri (strain ATCC 33323 / DSM 20243 / BCRC 14619 / CIP 102991 / JCM 1131 / KCTC 3163 / NCIMB 11718 / NCTC 13722 / AM63).